The chain runs to 122 residues: uncharacterized protein (122 aa).

A signal peptide spans 1 to 35 (MCCYVGKATKIFLCLAAALIVVGLVLGFGLAHRTW). The interval 55-83 (YGGGGGGGDPLPATSGAGDTPPGVPLTEP) is disordered.

This is an uncharacterized protein from Oryza sativa subsp. japonica (Rice).